Here is a 113-residue protein sequence, read N- to C-terminus: TYRO protein tyrosine kinase-binding protein (113 aa).

The signal sequence occupies residues 1–27 (MGGLEPCSRLLLLPLLLAVGGLRPVQA). Over 28–40 (QAQSDCSCSTVSP) the chain is Extracellular. The helical transmembrane segment at 41-61 (GVLAGIVMGDLVLTVLIALAV) threads the bilayer. D50 contributes to the Ca(2+) binding site. Residues 62–113 (YFLGRLVHRGRGAAEAATRKQRITETESPYQELQGQRSDVYSDLNMQRPYYK) are Cytoplasmic-facing. The disordered stretch occupies residues 75–113 (AEAATRKQRITETESPYQELQGQRSDVYSDLNMQRPYYK). Positions 80–108 (RKQRITETESPYQELQGQRSDVYSDLNMQ) constitute an ITAM domain. Residues 87–100 (TESPYQELQGQRSD) are compositionally biased toward polar residues. Phosphotyrosine occurs at positions 91 and 102.

Belongs to the TYROBP family. Homodimer; disulfide-linked. Homotrimer; disulfide-linked. Homotetramer; disulfide-linked. Homotrimers and homotetramers form when low levels of partner receptors are available and is competitive with assembly with interacting receptors. They may represent alternative oligomerization states or may be intermediates in the receptor assembly process. Binding of a metal cation aids in homooligomerization through coordination of the metal ion by the subunits of the oligomer. Interacts with TREM1. Interacts with TREM2. Interacts with CLECSF5. Interacts with CD300LB and CD300C2. Interacts with CD300E. Interacts (via ITAM domain) with SYK (via SH2 domains); activates SYK mediating neutrophils and macrophages integrin-mediated activation. Interacts with KLRC2. Interacts with CD300H. Interacts with KLRD1. Interacts with SIGLEC1. In terms of processing, following ligand binding by associated receptors, tyrosine phosphorylated in the ITAM domain which leads to activation of additional tyrosine kinases and subsequent cell activation.

Its subcellular location is the cell membrane. Functionally, adapter protein which non-covalently associates with activating receptors found on the surface of a variety of immune cells to mediate signaling and cell activation following ligand binding by the receptors. TYROBP is tyrosine-phosphorylated in the ITAM domain following ligand binding by the associated receptors which leads to activation of additional tyrosine kinases and subsequent cell activation. Also has an inhibitory role in some cells. Non-covalently associates with activating receptors of the CD300 family to mediate cell activation. Also mediates cell activation through association with activating receptors of the CD200R family. Required for neutrophil activation mediated by integrin. Required for the activation of myeloid cells mediated by the CLEC5A/MDL1 receptor. Associates with natural killer (NK) cell receptors such as the KLRD1/KLRC2 heterodimer to mediate NK cell activation. Associates with TREM1 to mediate activation of neutrophils and monocytes. Associates with TREM2 on monocyte-derived dendritic cells to mediate up-regulation of chemokine receptor CCR7 and dendritic cell maturation and survival. Association with TREM2 mediates cytokine-induced formation of multinucleated giant cells which are formed by the fusion of macrophages. Stabilizes the TREM2 C-terminal fragment (TREM2-CTF) produced by TREM2 ectodomain shedding which suppresses the release of pro-inflammatory cytokines. In microglia, required with TREM2 for phagocytosis of apoptotic neurons. Required with ITGAM/CD11B in microglia to control production of microglial superoxide ions which promote the neuronal apoptosis that occurs during brain development. Promotes pro-inflammatory responses in microglia following nerve injury which accelerates degeneration of injured neurons. Positively regulates the expression of the IRAK3/IRAK-M kinase and IL10 production by liver dendritic cells and inhibits their T cell allosimulatory ability. Negatively regulates B cell proliferation. Required for CSF1-mediated osteoclast cytoskeletal organization. Positively regulates multinucleation during osteoclast development. In Pan troglodytes (Chimpanzee), this protein is TYRO protein tyrosine kinase-binding protein.